A 90-amino-acid chain; its full sequence is Movement protein (90 aa).

A helical transmembrane segment spans residues 32–52; the sequence is FVFVTFGLLIAVGVAWLAYTL.

This sequence belongs to the mastrevirus movement protein family. As to quaternary structure, interacts with the capsid protein (CP). Part of a MP-CP-viral DNA complex.

The protein resides in the host membrane. Functionally, involved in the viral transport within, and between cells. This chain is Movement protein, found in Wheat dwarf virus (isolate Sweden) (WDV).